Here is a 994-residue protein sequence, read N- to C-terminus: Alanine--tRNA ligase, chloroplastic/mitochondrial (994 aa).

The tract at residues 1-29 (MGGLKLPPQTLHGIHGGRRPLTAPSSKPS) is disordered. His-672, His-676, Cys-774, and His-778 together coordinate Zn(2+).

Belongs to the class-II aminoacyl-tRNA synthetase family. In terms of assembly, monomer. Zn(2+) is required as a cofactor.

Its subcellular location is the plastid. The protein localises to the chloroplast. The protein resides in the mitochondrion. It carries out the reaction tRNA(Ala) + L-alanine + ATP = L-alanyl-tRNA(Ala) + AMP + diphosphate. Its function is as follows. Catalyzes the attachment of alanine to tRNA(Ala) in a two-step reaction: alanine is first activated by ATP to form Ala-AMP and then transferred to the acceptor end of tRNA(Ala). Also edits incorrectly charged tRNA(Ala) via its editing domain. This chain is Alanine--tRNA ligase, chloroplastic/mitochondrial, found in Populus trichocarpa (Western balsam poplar).